The following is a 376-amino-acid chain: Queuine tRNA-ribosyltransferase (376 aa).

Aspartate 93 serves as the catalytic Proton acceptor. Substrate is bound by residues 93–97, aspartate 147, glutamine 191, and glycine 218; that span reads DSGGF. Residues 249 to 255 are RNA binding; it reads GVGKPED. Aspartate 268 acts as the Nucleophile in catalysis. An RNA binding; important for wobble base 34 recognition region spans residues 273–277; sequence TRNAR. Cysteine 306, cysteine 308, cysteine 311, and histidine 337 together coordinate Zn(2+).

It belongs to the queuine tRNA-ribosyltransferase family. In terms of assembly, homodimer. Within each dimer, one monomer is responsible for RNA recognition and catalysis, while the other monomer binds to the replacement base PreQ1. Requires Zn(2+) as cofactor.

The catalysed reaction is 7-aminomethyl-7-carbaguanine + guanosine(34) in tRNA = 7-aminomethyl-7-carbaguanosine(34) in tRNA + guanine. It participates in tRNA modification; tRNA-queuosine biosynthesis. Functionally, catalyzes the base-exchange of a guanine (G) residue with the queuine precursor 7-aminomethyl-7-deazaguanine (PreQ1) at position 34 (anticodon wobble position) in tRNAs with GU(N) anticodons (tRNA-Asp, -Asn, -His and -Tyr). Catalysis occurs through a double-displacement mechanism. The nucleophile active site attacks the C1' of nucleotide 34 to detach the guanine base from the RNA, forming a covalent enzyme-RNA intermediate. The proton acceptor active site deprotonates the incoming PreQ1, allowing a nucleophilic attack on the C1' of the ribose to form the product. After dissociation, two additional enzymatic reactions on the tRNA convert PreQ1 to queuine (Q), resulting in the hypermodified nucleoside queuosine (7-(((4,5-cis-dihydroxy-2-cyclopenten-1-yl)amino)methyl)-7-deazaguanosine). This chain is Queuine tRNA-ribosyltransferase, found in Histophilus somni (strain 129Pt) (Haemophilus somnus).